Consider the following 372-residue polypeptide: Glutamate 5-kinase (372 aa).

Residue K14 participates in ATP binding. Substrate-binding residues include S54, D141, and N153. 173 to 174 lines the ATP pocket; that stretch reads TD. One can recognise a PUA domain in the interval 280–358; that stretch reads RGTLVLDAGA…EAIESILGYS (79 aa).

The protein belongs to the glutamate 5-kinase family.

It is found in the cytoplasm. It carries out the reaction L-glutamate + ATP = L-glutamyl 5-phosphate + ADP. It functions in the pathway amino-acid biosynthesis; L-proline biosynthesis; L-glutamate 5-semialdehyde from L-glutamate: step 1/2. Functionally, catalyzes the transfer of a phosphate group to glutamate to form L-glutamate 5-phosphate. The sequence is that of Glutamate 5-kinase from Pseudomonas putida (strain ATCC 700007 / DSM 6899 / JCM 31910 / BCRC 17059 / LMG 24140 / F1).